Here is a 506-residue protein sequence, read N- to C-terminus: Maturase K (506 aa).

Belongs to the intron maturase 2 family. MatK subfamily.

Its subcellular location is the plastid. It localises to the chloroplast. Its function is as follows. Usually encoded in the trnK tRNA gene intron. Probably assists in splicing its own and other chloroplast group II introns. The chain is Maturase K from Rhododendron hippophaeoides (Rhododendron).